Consider the following 138-residue polypeptide: Holo-[acyl-carrier-protein] synthase (138 aa).

Mg(2+) is bound by residues aspartate 11 and glutamate 65.

It belongs to the P-Pant transferase superfamily. AcpS family. Mg(2+) is required as a cofactor.

It is found in the cytoplasm. The enzyme catalyses apo-[ACP] + CoA = holo-[ACP] + adenosine 3',5'-bisphosphate + H(+). Transfers the 4'-phosphopantetheine moiety from coenzyme A to a Ser of acyl-carrier-protein. This is Holo-[acyl-carrier-protein] synthase from Ralstonia nicotianae (strain ATCC BAA-1114 / GMI1000) (Ralstonia solanacearum).